The chain runs to 293 residues: 4-hydroxybenzoate octaprenyltransferase (293 aa).

Helical transmembrane passes span 26-46, 49-69, 102-122, 148-168, 173-193, 217-237, 240-260, and 272-292; these read IGTL…AKGM, IKVL…GCII, LFAL…PLVV, FLGI…LGEV, WWLF…YAMI, WIAV…LSAE, FIYA…QRLI, and FLNN…DYLL.

It belongs to the UbiA prenyltransferase family. It depends on Mg(2+) as a cofactor.

Its subcellular location is the cell inner membrane. It carries out the reaction all-trans-octaprenyl diphosphate + 4-hydroxybenzoate = 4-hydroxy-3-(all-trans-octaprenyl)benzoate + diphosphate. The protein operates within cofactor biosynthesis; ubiquinone biosynthesis. In terms of biological role, catalyzes the prenylation of para-hydroxybenzoate (PHB) with an all-trans polyprenyl group. Mediates the second step in the final reaction sequence of ubiquinone-8 (UQ-8) biosynthesis, which is the condensation of the polyisoprenoid side chain with PHB, generating the first membrane-bound Q intermediate 3-octaprenyl-4-hydroxybenzoate. The polypeptide is 4-hydroxybenzoate octaprenyltransferase (Shewanella denitrificans (strain OS217 / ATCC BAA-1090 / DSM 15013)).